A 446-amino-acid chain; its full sequence is MSDTNKEVVDLVWGRPSGGGVPASLFRRWSQGFVFSETERSALEQFEGGPCAVIAPVQAFLLKNILFNTEGLNWKDISEEEQRTVLCSTLSEILELACLNKSQAFHLVTWPHAKTTDNSDITDSHPEPESSQPTDTPTALATEELGFERFHSVIQKRTLRTVAELKEAVLSLYDTWKNKFGVLLFLYSVILTKGIENIKNEIEDTTEPLIDPVYGHGSQSLINLLVTGHAVSNVWDGDRECSGMKLHGIYQQASVGFLTLMESLRYCKVGAFLKSPKFPIWILGSETHLSVFFTKEMALVAPESASEQARRVFQTFDPEDNGFIPDTLLEDVMKALDLVSEPDYVNLMKSKLDPEGLGIILLGQFLLEFFPDQDSVIPDSFPVYHYNGLKQSNHNEKVSYVEGTALVMGFEDPMVRTDDTPVKRCLQTKWPYIELLWTTERSPSLN.

The active-site Nucleophile is Cys51. Residues 117 to 128 (DNSDITDSHPEP) are compositionally biased toward basic and acidic residues. Residues 117 to 137 (DNSDITDSHPEPESSQPTDTP) form a disordered region. His288 functions as the Proton acceptor in the catalytic mechanism.

The protein belongs to the MINDY deubiquitinase family. FAM188 subfamily.

The protein resides in the nucleus. The enzyme catalyses Thiol-dependent hydrolysis of ester, thioester, amide, peptide and isopeptide bonds formed by the C-terminal Gly of ubiquitin (a 76-residue protein attached to proteins as an intracellular targeting signal).. Its function is as follows. Hydrolase that can remove 'Lys-48'-linked conjugated ubiquitin from proteins. The polypeptide is Ubiquitin carboxyl-terminal hydrolase MINDY-3 (mindy3) (Danio rerio (Zebrafish)).